Reading from the N-terminus, the 488-residue chain is GlcNAc-binding protein A (488 aa).

Residues 1-24 form the signal peptide; it reads MIMIITKKTLLPVTLALFSSGVMA. Positions 25 to 202 constitute a Chitin-binding type-4 domain; that stretch reads HGYVSSVEGG…SFYNVIDVMF (178 aa). The 42-residue stretch at 439 to 480 folds into the Chitin-binding type-3 domain; the sequence is AGSKVLATDGRIYECKPFPYSGYCIQWSPSATQFEPGVGSDW.

This sequence belongs to the GbpA family.

It localises to the secreted. Its function is as follows. Probably interacts with GlcNAc residues. May promote attachment to both epithelial cell surfaces and chitin. The chain is GlcNAc-binding protein A from Photobacterium profundum (strain SS9).